Consider the following 368-residue polypeptide: Glutamate 5-kinase (368 aa).

Residue K10 coordinates ATP. Residues S50, D137, and N149 each contribute to the substrate site. An ATP-binding site is contributed by 169 to 170 (TD). Positions 276 to 354 (RGTLVLDDGA…ESIVRELGYM (79 aa)) constitute a PUA domain.

It belongs to the glutamate 5-kinase family.

The protein localises to the cytoplasm. It catalyses the reaction L-glutamate + ATP = L-glutamyl 5-phosphate + ADP. The protein operates within amino-acid biosynthesis; L-proline biosynthesis; L-glutamate 5-semialdehyde from L-glutamate: step 1/2. Its function is as follows. Catalyzes the transfer of a phosphate group to glutamate to form L-glutamate 5-phosphate. In Pseudomonas savastanoi pv. phaseolicola (strain 1448A / Race 6) (Pseudomonas syringae pv. phaseolicola (strain 1448A / Race 6)), this protein is Glutamate 5-kinase.